The primary structure comprises 182 residues: MKLIDRRMRLTELLLRCSISVFALLALILVVTDTEVKLIFTIKKTAKYTDMKAVVFLVVANGIAAVYSLLQSVRCVVGTMKGKVLFSKPLAWAFFSGDQAMAYLNVAAIAATAESGVIAREGEEDLQWMRVCTMYGKFCNQMAIGVSSALLASIAMVFVSCISAFSLFRLYGATKDRRTTPW.

Residues 1 to 12 (MKLIDRRMRLTE) lie on the Cytoplasmic side of the membrane. A helical membrane pass occupies residues 13-31 (LLLRCSISVFALLALILVV). Over 32–52 (TDTEVKLIFTIKKTAKYTDMK) the chain is Extracellular. Residues 53–73 (AVVFLVVANGIAAVYSLLQSV) form a helical membrane-spanning segment. The Cytoplasmic portion of the chain corresponds to 74-89 (RCVVGTMKGKVLFSKP). A helical transmembrane segment spans residues 90-110 (LAWAFFSGDQAMAYLNVAAIA). Residues 111–141 (ATAESGVIAREGEEDLQWMRVCTMYGKFCNQ) lie on the Extracellular side of the membrane. Residues 142 to 162 (MAIGVSSALLASIAMVFVSCI) form a helical membrane-spanning segment. Residues 163-182 (SAFSLFRLYGATKDRRTTPW) lie on the Cytoplasmic side of the membrane.

The protein belongs to the Casparian strip membrane proteins (CASP) family. In terms of assembly, homodimer and heterodimers.

It is found in the cell membrane. The protein is CASP-like protein 2B1 of Arabidopsis thaliana (Mouse-ear cress).